Here is a 258-residue protein sequence, read N- to C-terminus: uncharacterized protein (258 aa).

Positions 16–148 (EAFDSFEYAE…VLRALNFDTH (133 aa)) constitute a Cyclin N-terminal domain.

Belongs to the cyclin family. Cyclin L subfamily.

It localises to the cytoplasm. The protein resides in the nucleus. This is an uncharacterized protein from Schizosaccharomyces pombe (strain 972 / ATCC 24843) (Fission yeast).